A 312-amino-acid chain; its full sequence is Taste receptor type 2 member 135 (312 aa).

Residues 1–19 (MSTGHTVLGCQTTDKTVVT) are Extracellular-facing. A helical transmembrane segment spans residues 20 to 40 (LFIILVLLCLVAVVGNGFIII). Residues 41 to 66 (ALGMKWLLRRTLSAHNKLLISLAASR) are Cytoplasmic-facing. Residues 67-87 (FCLQCVVIGKNIYVFLNPTSF) traverse the membrane as a helical segment. Residues 88–97 (PYNPVIQLLN) are Extracellular-facing. The helical transmembrane segment at 98–118 (LMWDFLTAATIWLCSLLGFFY) threads the bilayer. The Cytoplasmic portion of the chain corresponds to 119–140 (CVKIATLTHPVFVWLKYRLPGW). Residues 141-161 (VPWMLLSAVGMSSLTSILCFI) traverse the membrane as a helical segment. The Extracellular portion of the chain corresponds to 162–198 (GNYMIYQNHAKSGHQPWNVTGNSLRHSLEKFYFFSIK). The N-linked (GlcNAc...) asparagine glycan is linked to Asn-179. Residues 199–219 (IIMWTIPTVVFSIFMSLLLVS) traverse the membrane as a helical segment. Residues 220–244 (LVRHMKKTFLALSELRDVWAQAHFK) are Cytoplasmic-facing. A helical transmembrane segment spans residues 245–265 (ALLPLLSFIVLFISCFLTLVL). Over 266 to 277 (SSASNTPYQEFR) the chain is Extracellular. The chain crosses the membrane as a helical span at residues 278-298 (YWMWQVVIHLCTVIHPIVILF). Topologically, residues 299-312 (SNPVLRVVIKRGCC) are cytoplasmic.

This sequence belongs to the G-protein coupled receptor T2R family.

The protein resides in the membrane. In terms of biological role, putative taste receptor which may play a role in the perception of bitterness. This Mus musculus (Mouse) protein is Taste receptor type 2 member 135 (Tas2r135).